A 202-amino-acid polypeptide reads, in one-letter code: Adenylyl-sulfate kinase (202 aa).

Residue 31–38 participates in ATP binding; sequence GLSASGKS. The Phosphoserine intermediate role is filled by S105.

It belongs to the APS kinase family.

The catalysed reaction is adenosine 5'-phosphosulfate + ATP = 3'-phosphoadenylyl sulfate + ADP + H(+). It participates in sulfur metabolism; hydrogen sulfide biosynthesis; sulfite from sulfate: step 2/3. Its function is as follows. Catalyzes the synthesis of activated sulfate. In Saccharomyces cerevisiae (strain ATCC 204508 / S288c) (Baker's yeast), this protein is Adenylyl-sulfate kinase (MET14).